The sequence spans 457 residues: Flavohemoprotein-2 (457 aa).

Residues 2 to 157 (ALSEDTIKAV…LADLLIKREE (156 aa)) enclose the Globin domain. His-106 contacts heme b. Active-site charge relay system residues include Tyr-116 and Glu-156. Residues 168-456 (GGWRQTRTFR…FEMFGPFKAS (289 aa)) are reductase. Positions 171 to 278 (RQTRTFRVEE…APPYGDFFLR (108 aa)) constitute an FAD-binding FR-type domain. FAD-binding positions include Tyr-210 and 227-230 (RQYS). 320 to 325 (GIGQTP) is an NADP(+) binding site. An FAD-binding site is contributed by 449–452 (MFGP).

The protein belongs to the globin family. Two-domain flavohemoproteins subfamily. This sequence in the C-terminal section; belongs to the flavoprotein pyridine nucleotide cytochrome reductase family. As to quaternary structure, monomer. It depends on heme b as a cofactor. FAD is required as a cofactor.

The enzyme catalyses 2 nitric oxide + NADPH + 2 O2 = 2 nitrate + NADP(+) + H(+). It carries out the reaction 2 nitric oxide + NADH + 2 O2 = 2 nitrate + NAD(+) + H(+). Functionally, flavohemoprotein involved in nitric oxide (NO) detoxification in an aerobic process, termed nitric oxide dioxygenase (NOD) reaction that utilizes O(2) and NAD(P)H to convert NO to nitrate, which protects the protozoan parasite from various noxious nitrogen compounds. Therefore, plays a central role in the inducible response to nitrosative stress. May also be involved in O(2) detoxification. The protein is Flavohemoprotein-2 (hmpA-2) of Giardia intestinalis (strain P15) (Giardia lamblia).